Here is a 600-residue protein sequence, read N- to C-terminus: Nisin transport ATP-binding protein NisT (600 aa).

Transmembrane regions (helical) follow at residues 34–54 (AIYLIVLNAITAFVPLASLFI), 69–89 (LINIIIIYFIVQVITTVLGQL), 147–167 (AIIVELSSFISLLSSLFFIGT), 168–188 (WNIGVAILLLIVPVLSLVLFL), and 260–280 (IFLDFILNLINILTIFAMILS). One can recognise an ABC transmembrane type-1 domain in the interval 34–317 (AIYLIVLNAI…MIQNIYIIYN (284 aa)). Residues 352–592 (VKVINLSYVY…CQYYQELYYS (241 aa)) enclose the ABC transporter domain. ATP is bound at residue 386-393 (GKNGSGKS).

This sequence belongs to the ABC transporter superfamily. Nisin exporter (TC 3.A.1.111.3) family.

It localises to the cell membrane. Probably implicated in the export process of the lantibiotic nisin. In Lactococcus lactis subsp. lactis (Streptococcus lactis), this protein is Nisin transport ATP-binding protein NisT (nisT).